The chain runs to 553 residues: Peroxiredoxin-2A (553 aa).

A Thioredoxin domain is found at 4–160 (IDVGDFVPDG…LMKMTTTTMS (157 aa)). Residue C51 is the Cysteine sulfenic acid (-SOH) intermediate of the active site. Positions 156 to 201 (TTTMSNLPTDLLEEIISRVPRKYMRAVRLTCKRWNGMFKSQSFTKM) constitute an F-box domain.

The protein belongs to the peroxiredoxin family. Prx5 subfamily. Monomer.

It carries out the reaction [glutaredoxin]-dithiol + a hydroperoxide = [glutaredoxin]-disulfide + an alcohol + H2O. Thiol-specific peroxidase that catalyzes the reduction of hydrogen peroxide and organic hydroperoxides to water and alcohols, respectively. Plays a role in cell protection against oxidative stress by detoxifying peroxides. May be involved in intracellular redox signaling. This is Peroxiredoxin-2A (PRXIIA) from Arabidopsis thaliana (Mouse-ear cress).